The sequence spans 349 residues: AA9 family lytic polysaccharide monooxygenase A (349 aa).

The signal sequence occupies residues 1–19 (MKSTFGLLALAAAAKLVSA). Positions 20 and 102 each coordinate Cu(2+). A disulfide bridge connects residues cysteine 62 and cysteine 183. Histidine 169 is a binding site for O2. Tyrosine 180 is a binding site for Cu(2+). A disordered region spans residues 233 to 304 (DGSSSGSSGS…SGSNSGSDSC (72 aa)). Low complexity-rich tracts occupy residues 234 to 262 (GSSS…AVPT) and 269 to 304 (TSAT…SDSC). Residues 311-347 (GSVKIYGQCGGQNYSGPTSCEAGLICKEWNPYYHQCV) form the CBM1 domain. N-linked (GlcNAc...) asparagine glycosylation is present at asparagine 323.

Belongs to the polysaccharide monooxygenase AA9 family. Requires Cu(2+) as cofactor.

Its subcellular location is the secreted. The enzyme catalyses [(1-&gt;4)-beta-D-glucosyl]n+m + reduced acceptor + O2 = 4-dehydro-beta-D-glucosyl-[(1-&gt;4)-beta-D-glucosyl]n-1 + [(1-&gt;4)-beta-D-glucosyl]m + acceptor + H2O.. Functionally, lytic polysaccharide monooxygenase (LPMO) that depolymerizes crystalline and amorphous polysaccharides via the oxidation of scissile alpha- or beta-(1-4)-glycosidic bonds, yielding C4 oxidation products. Catalysis by LPMOs requires the reduction of the active-site copper from Cu(II) to Cu(I) by a reducing agent and H(2)O(2) or O(2) as a cosubstrate. The protein is AA9 family lytic polysaccharide monooxygenase A (eglD) of Aspergillus fumigatus (strain CBS 144.89 / FGSC A1163 / CEA10) (Neosartorya fumigata).